The sequence spans 266 residues: Methionine aminopeptidase (266 aa).

His-80 is a substrate binding site. A divalent metal cation-binding residues include Asp-98, Asp-109, and His-172. Residue His-179 participates in substrate binding. The a divalent metal cation site is built by Glu-206 and Glu-237.

The protein belongs to the peptidase M24A family. Methionine aminopeptidase type 1 subfamily. In terms of assembly, monomer. It depends on Co(2+) as a cofactor. The cofactor is Zn(2+). Requires Mn(2+) as cofactor. Fe(2+) is required as a cofactor.

It catalyses the reaction Release of N-terminal amino acids, preferentially methionine, from peptides and arylamides.. Functionally, removes the N-terminal methionine from nascent proteins. The N-terminal methionine is often cleaved when the second residue in the primary sequence is small and uncharged (Met-Ala-, Cys, Gly, Pro, Ser, Thr, or Val). Requires deformylation of the N(alpha)-formylated initiator methionine before it can be hydrolyzed. The polypeptide is Methionine aminopeptidase (Buchnera aphidicola subsp. Baizongia pistaciae (strain Bp)).